Here is a 550-residue protein sequence, read N- to C-terminus: Dihydroxy-acid dehydratase (550 aa).

Asp-78 contributes to the Mg(2+) binding site. Cys-119 lines the [2Fe-2S] cluster pocket. 2 residues coordinate Mg(2+): Asp-120 and Lys-121. An N6-carboxylysine modification is found at Lys-121. Cys-192 is a [2Fe-2S] cluster binding site. Glu-440 is a binding site for Mg(2+). The active-site Proton acceptor is the Ser-466.

It belongs to the IlvD/Edd family. In terms of assembly, homodimer. [2Fe-2S] cluster serves as cofactor. Mg(2+) is required as a cofactor.

It catalyses the reaction (2R)-2,3-dihydroxy-3-methylbutanoate = 3-methyl-2-oxobutanoate + H2O. The enzyme catalyses (2R,3R)-2,3-dihydroxy-3-methylpentanoate = (S)-3-methyl-2-oxopentanoate + H2O. The protein operates within amino-acid biosynthesis; L-isoleucine biosynthesis; L-isoleucine from 2-oxobutanoate: step 3/4. It functions in the pathway amino-acid biosynthesis; L-valine biosynthesis; L-valine from pyruvate: step 3/4. Its function is as follows. Functions in the biosynthesis of branched-chain amino acids. Catalyzes the dehydration of (2R,3R)-2,3-dihydroxy-3-methylpentanoate (2,3-dihydroxy-3-methylvalerate) into 2-oxo-3-methylpentanoate (2-oxo-3-methylvalerate) and of (2R)-2,3-dihydroxy-3-methylbutanoate (2,3-dihydroxyisovalerate) into 2-oxo-3-methylbutanoate (2-oxoisovalerate), the penultimate precursor to L-isoleucine and L-valine, respectively. The protein is Dihydroxy-acid dehydratase of Thermodesulfovibrio yellowstonii (strain ATCC 51303 / DSM 11347 / YP87).